A 558-amino-acid chain; its full sequence is Alpha-1,3-mannosyltransferase MNT2 (558 aa).

Residues 1-6 are Cytoplasmic-facing; it reads MRRKNR. A helical; Signal-anchor for type II membrane protein membrane pass occupies residues 7 to 27; the sequence is LFILVVLLGIVLVVYYSQLNS. Over 28–558 the chain is Lumenal; it reads LDLVEPVQSS…QIVDIWNKDI (531 aa). N-linked (GlcNAc...) asparagine glycosylation is present at Asn187.

This sequence belongs to the MNN1/MNT family.

It is found in the golgi apparatus membrane. It functions in the pathway protein modification; protein glycosylation. Functionally, mannosyltransferase involved in adding the 4th and 5th mannose residues of O-linked glycans. This chain is Alpha-1,3-mannosyltransferase MNT2 (MNT2), found in Saccharomyces cerevisiae (strain ATCC 204508 / S288c) (Baker's yeast).